We begin with the raw amino-acid sequence, 37 residues long: Translationally-controlled tumor protein homolog (37 aa).

The region spanning 1–37 is the TCTP domain; that stretch reads MKIFRDILTNAEVVXDNDKPMDVLDEIVYAXQGRYIE.

Belongs to the TCTP family. Monomer.

It localises to the cytoplasm. Its function is as follows. Binds calcium; exact function not known. The sequence is that of Translationally-controlled tumor protein homolog from Trypanosoma brucei brucei.